A 462-amino-acid polypeptide reads, in one-letter code: Cysteine--tRNA ligase (462 aa).

Residue C27 coordinates Zn(2+). Residues 29-39 (PTVYDLAHIGN) carry the 'HIGH' region motif. Residues C211, H236, and E240 each coordinate Zn(2+). Positions 270–274 (KMSKS) match the 'KMSKS' region motif. K273 contacts ATP.

Belongs to the class-I aminoacyl-tRNA synthetase family. In terms of assembly, monomer. The cofactor is Zn(2+).

Its subcellular location is the cytoplasm. The enzyme catalyses tRNA(Cys) + L-cysteine + ATP = L-cysteinyl-tRNA(Cys) + AMP + diphosphate. This Anaplasma phagocytophilum (strain HZ) protein is Cysteine--tRNA ligase.